A 374-amino-acid chain; its full sequence is Queuine tRNA-ribosyltransferase (374 aa).

Asp89 functions as the Proton acceptor in the catalytic mechanism. Residues 89-93, Asp143, Gln187, and Gly214 each bind substrate; that span reads DSGGF. The tract at residues 245–251 is RNA binding; sequence GVGKPED. Asp264 acts as the Nucleophile in catalysis. The tract at residues 269–273 is RNA binding; important for wobble base 34 recognition; sequence TRNAR. Zn(2+) contacts are provided by Cys302, Cys304, Cys307, and His333.

Belongs to the queuine tRNA-ribosyltransferase family. As to quaternary structure, homodimer. Within each dimer, one monomer is responsible for RNA recognition and catalysis, while the other monomer binds to the replacement base PreQ1. Zn(2+) is required as a cofactor.

It catalyses the reaction 7-aminomethyl-7-carbaguanine + guanosine(34) in tRNA = 7-aminomethyl-7-carbaguanosine(34) in tRNA + guanine. It functions in the pathway tRNA modification; tRNA-queuosine biosynthesis. Functionally, catalyzes the base-exchange of a guanine (G) residue with the queuine precursor 7-aminomethyl-7-deazaguanine (PreQ1) at position 34 (anticodon wobble position) in tRNAs with GU(N) anticodons (tRNA-Asp, -Asn, -His and -Tyr). Catalysis occurs through a double-displacement mechanism. The nucleophile active site attacks the C1' of nucleotide 34 to detach the guanine base from the RNA, forming a covalent enzyme-RNA intermediate. The proton acceptor active site deprotonates the incoming PreQ1, allowing a nucleophilic attack on the C1' of the ribose to form the product. After dissociation, two additional enzymatic reactions on the tRNA convert PreQ1 to queuine (Q), resulting in the hypermodified nucleoside queuosine (7-(((4,5-cis-dihydroxy-2-cyclopenten-1-yl)amino)methyl)-7-deazaguanosine). The protein is Queuine tRNA-ribosyltransferase of Serratia proteamaculans (strain 568).